A 462-amino-acid chain; its full sequence is Kinetochore protein Nuf2-B (462 aa).

Residues 143–462 (SGYKSALENV…AELNRRLSRQ (320 aa)) adopt a coiled-coil conformation. A disordered region spans residues 236-259 (EQERMKSQIVESPEQRKSKTERMK). Over residues 248–259 (PEQRKSKTERMK) the composition is skewed to basic and acidic residues.

Belongs to the NUF2 family. In terms of assembly, component of the NDC80 complex, which is composed of ndc80, cdca1, spbc24 and spbc25. The NDC80 complex interacts with mis12 and zwint.

It is found in the nucleus. It localises to the chromosome. Its subcellular location is the centromere. The protein localises to the kinetochore. In terms of biological role, acts as a component of the essential kinetochore-associated NDC80 complex, which is required for chromosome segregation and spindle checkpoint activity. Required for kinetochore integrity and the organization of stable microtubule binding sites in the outer plate of the kinetochore. The NDC80 complex synergistically enhances the affinity of the SKA1 complex for microtubules and may allow the NDC80 complex to track depolymerizing microtubules. This Xenopus laevis (African clawed frog) protein is Kinetochore protein Nuf2-B (nuf2-b).